The following is a 463-amino-acid chain: Argininosuccinate lyase (463 aa).

Belongs to the lyase 1 family. Argininosuccinate lyase subfamily.

It is found in the cytoplasm. It catalyses the reaction 2-(N(omega)-L-arginino)succinate = fumarate + L-arginine. It participates in amino-acid biosynthesis; L-arginine biosynthesis; L-arginine from L-ornithine and carbamoyl phosphate: step 3/3. In Streptococcus pneumoniae (strain 70585), this protein is Argininosuccinate lyase.